A 237-amino-acid polypeptide reads, in one-letter code: Uridylate kinase (237 aa).

12–15 (KLSG) contributes to the ATP binding site. An involved in allosteric activation by GTP region spans residues 20–25 (GENGFG). G54 is a binding site for UMP. ATP is bound by residues G55 and R59. UMP-binding positions include D72 and 133–140 (TGNPYFST). 2 residues coordinate ATP: Y166 and D169.

Belongs to the UMP kinase family. Homohexamer.

It is found in the cytoplasm. The catalysed reaction is UMP + ATP = UDP + ADP. Its pathway is pyrimidine metabolism; CTP biosynthesis via de novo pathway; UDP from UMP (UMPK route): step 1/1. Its activity is regulated as follows. Allosterically activated by GTP. Inhibited by UTP. Functionally, catalyzes the reversible phosphorylation of UMP to UDP. The polypeptide is Uridylate kinase (Clostridium perfringens (strain SM101 / Type A)).